A 266-amino-acid polypeptide reads, in one-letter code: Biotin--[acetyl-CoA-carboxylase] ligase (266 aa).

In terms of domain architecture, BPL/LPL catalytic spans 14-202 (RSLRDQLIGA…ELEARIIQWR (189 aa)). Biotin contacts are provided by residues 38 to 39 (ST), glutamine 63, arginine 67, and lysine 138.

Belongs to the biotin--protein ligase family. Monomer in solution. Forms dimers under specific crystallization conditions.

The catalysed reaction is biotin + L-lysyl-[protein] + ATP = N(6)-biotinyl-L-lysyl-[protein] + AMP + diphosphate + H(+). It catalyses the reaction biotin + ATP + H(+) = biotinyl-5'-AMP + diphosphate. It carries out the reaction biotinyl-5'-AMP + L-lysyl-[protein] = N(6)-biotinyl-L-lysyl-[protein] + AMP + 2 H(+). Its activity is regulated as follows. Binding of biotin and ATP significantly increases the thermal stability of BirA and leads to the formation of a high affinity holoenzyme complex. Catalyzes the transfer of biotin onto a conserved lysine residue of the biotin carboxyl carrier protein (BCCP) domain of acetyl-CoA carboxylase and converts it to active holo-BCCP. Forms an acyl-adenylate intermediate. Cannot use GTP or desthiobiotin. This is Biotin--[acetyl-CoA-carboxylase] ligase from Mycobacterium tuberculosis (strain ATCC 25618 / H37Rv).